Here is an 838-residue protein sequence, read N- to C-terminus: Kinesin-like protein KIFC2 (838 aa).

Over residues 23–32 (AAAAEPGDPA) the composition is skewed to low complexity. Disordered stretches follow at residues 23 to 48 (AAAA…DLPA) and 140 to 185 (LLQG…GQQP). Over residues 156-167 (DGSTSQEESPSH) the composition is skewed to polar residues. The stretch at 186–351 (LQLEEDQRAW…SLRQGCGDLR (166 aa)) forms a coiled coil. The 332-residue stretch at 409 to 740 (NIRVLCRLRP…ARRSPRGRRI (332 aa)) folds into the Kinesin motor domain. Residue 484-491 (GQTGTGKT) participates in ATP binding. The interval 718-792 (RSPPTRARPP…SPGPPAPLRR (75 aa)) is disordered.

This sequence belongs to the TRAFAC class myosin-kinesin ATPase superfamily. Kinesin family.

The protein localises to the cytoplasm. It localises to the cytoskeleton. In terms of biological role, may play a role in microtubule-dependent retrograde axonal transport. May function as the motor for the transport of multivesicular body (MVB)-like organelles in dendrites. This Homo sapiens (Human) protein is Kinesin-like protein KIFC2 (KIFC2).